The chain runs to 257 residues: Thiazole synthase (257 aa).

Lysine 95 (schiff-base intermediate with DXP) is an active-site residue. Residues glycine 156, 182-183 (AG), and 204-205 (NT) contribute to the 1-deoxy-D-xylulose 5-phosphate site.

It belongs to the ThiG family. In terms of assembly, homotetramer. Forms heterodimers with either ThiH or ThiS.

It localises to the cytoplasm. The catalysed reaction is [ThiS sulfur-carrier protein]-C-terminal-Gly-aminoethanethioate + 2-iminoacetate + 1-deoxy-D-xylulose 5-phosphate = [ThiS sulfur-carrier protein]-C-terminal Gly-Gly + 2-[(2R,5Z)-2-carboxy-4-methylthiazol-5(2H)-ylidene]ethyl phosphate + 2 H2O + H(+). It participates in cofactor biosynthesis; thiamine diphosphate biosynthesis. Its function is as follows. Catalyzes the rearrangement of 1-deoxy-D-xylulose 5-phosphate (DXP) to produce the thiazole phosphate moiety of thiamine. Sulfur is provided by the thiocarboxylate moiety of the carrier protein ThiS. In vitro, sulfur can be provided by H(2)S. In Vibrio vulnificus (strain CMCP6), this protein is Thiazole synthase.